The chain runs to 173 residues: Peptidyl-prolyl cis-trans isomerase cyp3 (173 aa).

A PPIase cyclophilin-type domain is found at 8–172; that stretch reads FMDIAIDGRL…SNVAIVECGE (165 aa).

Belongs to the cyclophilin-type PPIase family. PPIase H subfamily.

Its subcellular location is the cytoplasm. The protein resides in the cytoskeleton. It is found in the microtubule organizing center. The protein localises to the spindle pole body. The catalysed reaction is [protein]-peptidylproline (omega=180) = [protein]-peptidylproline (omega=0). PPIases accelerate the folding of proteins. It catalyzes the cis-trans isomerization of proline imidic peptide bonds in oligopeptides. This is Peptidyl-prolyl cis-trans isomerase cyp3 (cyp3) from Schizosaccharomyces pombe (strain 972 / ATCC 24843) (Fission yeast).